Consider the following 547-residue polypeptide: Signal recognition particle receptor subunit alpha homolog (547 aa).

The interval 124–174 is disordered; that stretch reads LENETDTKSLPVEANNDNSARKKNEYEMKKKGAQSKQTNAPKKGKKQLRKW. Over residues 142–153 the composition is skewed to basic and acidic residues; that stretch reads SARKKNEYEMKK. Positions 343–546 are NG domain; sequence YTISLIGVNG…SVDWVVDQLM (204 aa). GTP is bound by residues 349–356, 437–441, and 498–501; these read GVNGVGKS, DTAGR, and SKVD.

It belongs to the GTP-binding SRP family. Heterodimer of an alpha and a beta chain.

The protein localises to the endoplasmic reticulum membrane. Functionally, component of the SRP (signal recognition particle) receptor (SR). Ensures, in conjunction with the signal recognition particle, the correct targeting of the nascent secretory proteins to the endoplasmic reticulum membrane system. GTP hydrolysis may enhance the fidelity of and provide unidirectionality to the targeting reaction. In Schizosaccharomyces pombe (strain 972 / ATCC 24843) (Fission yeast), this protein is Signal recognition particle receptor subunit alpha homolog (srp101).